The chain runs to 209 residues: Regulator of G-protein signaling 1 (209 aa).

The interval F19–R42 is disordered. The segment covering K24 to K38 has biased composition (basic and acidic residues). The 116-residue stretch at S85 to L200 folds into the RGS domain.

As to quaternary structure, interacts with GNAI1 and GNAQ. Detected in spleen, lymph node and intestine.

Its subcellular location is the cell membrane. It is found in the cytoplasm. The protein resides in the cytosol. Its function is as follows. Regulates G protein-coupled receptor signaling cascades, including signaling downstream of the N-formylpeptide chemoattractant receptors and leukotriene receptors. Inhibits B cell chemotaxis toward CXCL12. Inhibits signal transduction by increasing the GTPase activity of G protein alpha subunits thereby driving them into their inactive GDP-bound form. The polypeptide is Regulator of G-protein signaling 1 (Rgs1) (Mus musculus (Mouse)).